The sequence spans 156 residues: 6,7-dimethyl-8-ribityllumazine synthase (156 aa).

5-amino-6-(D-ribitylamino)uracil-binding positions include Trp-22, 56 to 58, and 80 to 82; these read AYE and AVI. (2S)-2-hydroxy-3-oxobutyl phosphate is bound at residue 85–86; the sequence is DT. The active-site Proton donor is His-88. Residue Phe-113 participates in 5-amino-6-(D-ribitylamino)uracil binding. Arg-127 contributes to the (2S)-2-hydroxy-3-oxobutyl phosphate binding site.

This sequence belongs to the DMRL synthase family.

The catalysed reaction is (2S)-2-hydroxy-3-oxobutyl phosphate + 5-amino-6-(D-ribitylamino)uracil = 6,7-dimethyl-8-(1-D-ribityl)lumazine + phosphate + 2 H2O + H(+). Its pathway is cofactor biosynthesis; riboflavin biosynthesis; riboflavin from 2-hydroxy-3-oxobutyl phosphate and 5-amino-6-(D-ribitylamino)uracil: step 1/2. Its function is as follows. Catalyzes the formation of 6,7-dimethyl-8-ribityllumazine by condensation of 5-amino-6-(D-ribitylamino)uracil with 3,4-dihydroxy-2-butanone 4-phosphate. This is the penultimate step in the biosynthesis of riboflavin. This chain is 6,7-dimethyl-8-ribityllumazine synthase, found in Deinococcus deserti (strain DSM 17065 / CIP 109153 / LMG 22923 / VCD115).